Reading from the N-terminus, the 250-residue chain is Small ribosomal subunit protein uS2 (250 aa).

It belongs to the universal ribosomal protein uS2 family.

This chain is Small ribosomal subunit protein uS2, found in Acidovorax sp. (strain JS42).